The chain runs to 532 residues: uncharacterized protein (532 aa).

13 helical membrane passes run 13 to 33 (MSLLIVLMAGLFLAILNQTLL), 53 to 73 (WLTTGYMLVNGVLIPLSAFLI), 80 to 100 (SLFLVAMFCFTLGTLVCGIAP), 111 to 131 (IQAVGGGILQPLVMTTILLIF), 142 to 162 (IFGLAMMFAPAVGPTLSGWII), 169 to 189 (IMFYGLVPIGAIVIIVAFFIF), 203 to 223 (LGAILSIVGFASLLYGVSEAG), 231 to 251 (IVLSTVIIGAIAIVAFVVQQL), 273 to 293 (VINIIITVALYTGMFLLPIYL), 306 to 326 (LLLLPGAIVMLIMSPISGILF), 334 to 354 (LAIIGLLVTVVTTYQYTQLTI), 361 to 381 (IMLIYSIRAFGMSLLMMPVMT), and 483 to 503 (INDAFMWATLFCVAGLILSIF).

The protein belongs to the major facilitator superfamily. EmrB family.

It localises to the cell membrane. This is an uncharacterized protein from Bacillus subtilis (strain 168).